Here is a 156-residue protein sequence, read N- to C-terminus: Large ribosomal subunit protein uL15 (156 aa).

Positions 1–13 (MKLNEIKDNEGAT) are enriched in basic and acidic residues. The segment at 1-41 (MKLNEIKDNEGATKNRKRLGRGIGSGSGKTAGRGVKGQKAR) is disordered. Residues 21–35 (RGIGSGSGKTAGRGV) are compositionally biased toward gly residues.

The protein belongs to the universal ribosomal protein uL15 family. Part of the 50S ribosomal subunit.

Its function is as follows. Binds to the 23S rRNA. The polypeptide is Large ribosomal subunit protein uL15 (Sinorhizobium medicae (strain WSM419) (Ensifer medicae)).